We begin with the raw amino-acid sequence, 291 residues long: Energy-coupling factor transporter ATP-binding protein EcfA2 (291 aa).

Residues 3-246 form the ABC transporter domain; that stretch reads ITFKDVSYTY…PEWLTSKQLG (244 aa). An ATP-binding site is contributed by 40–47; the sequence is GHTGSGKS.

The protein belongs to the ABC transporter superfamily. Energy-coupling factor EcfA family. As to quaternary structure, forms a stable energy-coupling factor (ECF) transporter complex composed of 2 membrane-embedded substrate-binding proteins (S component), 2 ATP-binding proteins (A component) and 2 transmembrane proteins (T component).

The protein localises to the cell membrane. Functionally, ATP-binding (A) component of a common energy-coupling factor (ECF) ABC-transporter complex. Unlike classic ABC transporters this ECF transporter provides the energy necessary to transport a number of different substrates. The chain is Energy-coupling factor transporter ATP-binding protein EcfA2 from Latilactobacillus sakei subsp. sakei (strain 23K) (Lactobacillus sakei subsp. sakei).